A 174-amino-acid chain; its full sequence is Nucleoside-triphosphatase THEP1 (174 aa).

Residues 7 to 14 and 94 to 101 each bind ATP; these read GRPGVGKT and LIIIDEIG.

It belongs to the THEP1 NTPase family.

The enzyme catalyses a ribonucleoside 5'-triphosphate + H2O = a ribonucleoside 5'-diphosphate + phosphate + H(+). Its function is as follows. Has nucleotide phosphatase activity towards ATP, GTP, CTP, TTP and UTP. May hydrolyze nucleoside diphosphates with lower efficiency. The chain is Nucleoside-triphosphatase THEP1 from Thermotoga sp. (strain RQ2).